Consider the following 194-residue polypeptide: Der GTPase-activating protein YihI (194 aa).

The interval 1 to 87 is disordered; the sequence is MSRQKKSRNI…RDPRLGSRKK (87 aa). Over residues 37–48 the composition is skewed to basic and acidic residues; it reads TRYELDAKARED.

The protein belongs to the YihI family. As to quaternary structure, interacts with Der.

A GTPase-activating protein (GAP) that modifies Der/EngA GTPase function. May play a role in ribosome biogenesis. This Mannheimia succiniciproducens (strain KCTC 0769BP / MBEL55E) protein is Der GTPase-activating protein YihI.